Reading from the N-terminus, the 262-residue chain is Probable esterase azaC (262 aa).

Residues Ser119, Asp188, and His216 each act as charge relay system in the active site.

This sequence belongs to the LovG family.

The protein operates within secondary metabolite biosynthesis. In terms of biological role, probable esterase; part of the gene cluster that mediates the biosynthesis of azaphilones, a class of fungal metabolites characterized by a highly oxygenated pyrano-quinone bicyclic core and exhibiting a broad range of bioactivities. In the first step, the non-reducing polyketide synthase azaA forms the hexaketide precursor from successive condensations of five malonyl-CoA units, presumably with a simple acetyl-CoA starter unit. The reactive polyketide chain then undergoes a PT-mediated C2-C7 cyclization to afford the aromatic ring and is eventually released as an aldehyde through the R-domain. The putative ketoreductase azaE is proposed to catalyze the reduction of the terminal ketone resulting in the early culture product FK17-P2a. The monooxygenase azaH was demonstrated to be the only enzyme required to convert FK17-P2a to azanigerone E. AzaH first hydroxylates the benzaldehyde intermediate FK17-P2a at C4, which triggers the formation of the pyran-ring to afford azanigerone E. In parallel, the 2,4-dimethylhexanoyl chain is synthesized by the HR-PKS azaB and is proposed to be transferred to the C4-hydroxyl of azanigerone E by the acyltransferase azaD directly from the ACP domain of azaB. Alternatively, the 2,4-dimethyl-hexanoyl chain may be offloaded from the HR-PKS as a carboxylic acid and converted to an acyl-CoA by azaF. The resulting acyl-CoA molecule could then be taken up as a substrate by AzaD to form azanigerone B. To yield the carboxylic acid substituent in azanigerone A, the hydroxypropyl side chain of azanigerone B would need to undergo a C-C oxidative cleavage catalyzed by cytochrome P450 AzaI. AzaI is proposed to act on a vicinal diol that leads to a C-C bond scission either through an alkoxyradical intermediate or a peroxy complex. In the biosynthesis of azanigerone A, azanigerone B first undergoes hydroxylation at C10, possibly catalyzed by one of the two FAD-dependent monooxygenases encoded in the cluster, azaG or azaL, resulting in the vicinal diol azanigerone C. Oxidative cleavage of azanigerone C by azaI would yield the corresponding aldehyde derivative of azanigerone A. Finally, the dehydrogenase azaJ is proposed to convert the aldehyde functional group into the carboxylic acid, completing the conversion from azanigerone B to azanigerone A. Alternatively, the oxidation of aldehyde to carboxylic acid may be catalyzed by the same P450 enzyme azaI via consecutive oxidation or by endogenous alcohol dehydrogenase. This is Probable esterase azaC from Aspergillus niger (strain ATCC 1015 / CBS 113.46 / FGSC A1144 / LSHB Ac4 / NCTC 3858a / NRRL 328 / USDA 3528.7).